A 543-amino-acid chain; its full sequence is Sarafotoxin (543 aa).

The N-terminal stretch at 1 to 23 is a signal peptide; the sequence is MALLPRLAAGGLLLLLALAALEG. A propeptide spanning residues 24–69 is cleaved from the precursor; that stretch reads KPAPSALSQLLEKRSEDQAAAGRIIDGGDTKQAARDPSPQRNVEPL. Residues 45–65 are disordered; sequence GRIIDGGDTKQAARDPSPQRN. 12 tandem repeats follow at residues 51–90, 91–130, 131–170, 171–210, 211–250, 251–290, 291–330, 331–370, 371–410, 411–450, 451–490, and 491–530. Residues 51–530 are 12 X 40 AA tandem repeats; sequence GDTKQAARDP…LNFCHQDVIW (480 aa). 2 cysteine pairs are disulfide-bonded: Cys70-Cys84 and Cys72-Cys80. The propeptide occupies 92 to 109; sequence DTKQAARDPSPQRNVEPL. 2 disulfides stabilise this stretch: Cys110–Cys124 and Cys112–Cys120. Residues 132–149 constitute a propeptide that is removed on maturation; it reads DTKQAARDPSPQRNVEPL. 2 disulfide bridges follow: Cys150–Cys164 and Cys152–Cys160. Residues 172–189 constitute a propeptide that is removed on maturation; the sequence is DTKQAARDPSPQRNVEPL. 2 disulfides stabilise this stretch: Cys190–Cys204 and Cys192–Cys200. The propeptide occupies 212-229; it reads DTKQAARDPSPQRNVEPL. Disulfide bonds link Cys230–Cys244 and Cys232–Cys240. Residues 252–269 constitute a propeptide that is removed on maturation; that stretch reads DTKQAARDPSPQRNVEPL. 2 disulfides stabilise this stretch: Cys270–Cys284 and Cys272–Cys280. The propeptide occupies 292-309; sequence DTKQAARDPSPQRNVEPL. Disulfide bonds link Cys310-Cys324 and Cys312-Cys320. The propeptide occupies 332 to 349; that stretch reads DTKQAARDPSPQRNVEPL. 2 cysteine pairs are disulfide-bonded: Cys350–Cys364 and Cys352–Cys360. A propeptide spanning residues 372–389 is cleaved from the precursor; sequence DTKQAARDPSPQRNVEPL. Intrachain disulfides connect Cys390–Cys404 and Cys392–Cys400. A propeptide spanning residues 412-429 is cleaved from the precursor; that stretch reads DTKQAARDPSPQRNVEPL. 2 cysteine pairs are disulfide-bonded: Cys430/Cys444 and Cys432/Cys440. The propeptide occupies 452 to 469; it reads DTKQAARDPSPQRNVEPL. 2 cysteine pairs are disulfide-bonded: Cys470–Cys484 and Cys472–Cys480. A propeptide spanning residues 492–509 is cleaved from the precursor; that stretch reads DTKQAARDPSPQRNVEPL. Cystine bridges form between Cys510/Cys524 and Cys512/Cys520. Positions 532–543 are excised as a propeptide; that stretch reads NADTSANPEFLG.

Belongs to the endothelin/sarafotoxin family. In terms of tissue distribution, expressed by the venom gland.

The protein resides in the secreted. Its function is as follows. Vasoconstrictor activity. These toxins cause cardiac arrest probably as a result of coronary vasospasm. In terms of biological role, vasoconstrictor activity. Causes cardiac arrest probably as a result of coronary vasospasm. Displays high agonistic activities towards endothelin-2 receptor (EDNRB) (displays affinity in the picomolar range) and endothelin-1 receptor (EDNRA) (lower affinities). The protein is Sarafotoxin of Atractaspis engaddensis (Israeli burrowing asp).